Here is a 557-residue protein sequence, read N- to C-terminus: Inositol-3-phosphate synthase 1 (557 aa).

The NAD(+) site is built by glycine 67, glycine 68, asparagine 69, asparagine 70, aspartate 141, serine 177, valine 178, glutamine 188, arginine 191, threonine 228, alanine 229, asparagine 230, threonine 231, glycine 278, serine 279, aspartate 303, serine 306, asparagine 337, asparagine 338, aspartate 339, and lysine 352. Position 279 is a phosphoserine (serine 279). Serine 357 is modified (phosphoserine). 4 residues coordinate NAD(+): glycine 390, aspartate 391, aspartate 419, and serine 420. The interval 514 to 557 (GIKPEEVKATSPLPCKKESTPATNGCTGDANGHTQAPTPELSTA) is disordered. Serine 524 carries the post-translational modification Phosphoserine. Over residues 533-557 (TPATNGCTGDANGHTQAPTPELSTA) the composition is skewed to polar residues.

The protein belongs to the myo-inositol 1-phosphate synthase family. As to quaternary structure, homotrimer. NAD(+) serves as cofactor. In terms of processing, phosphorylation at Ser-524 does not appear to affect enzyme activity, and is detected in brain and testis. In terms of tissue distribution, expressed in testis, brain and epididymis (at protein level). Moderately expressed in brain, lung, liver, and kidney. Low expression in heart and spleen. Very low expression in skeletal muscle. As to expression, expressed in testis, spleen, heart, brainstem, hippocampus, cerebellum, cortex and amygdala. Absent or very lowly expressed in intestine, lung and muscle. Expressed in intestine, lung, liver, muscle, testis, spleen, brainstem, hippocampus, cerebellum, cortex and amygdala. Absent or lowly expressed in heart and kidney. In terms of tissue distribution, expressed in intestine (at protein level).

It localises to the cytoplasm. The catalysed reaction is D-glucose 6-phosphate = 1D-myo-inositol 3-phosphate. It functions in the pathway polyol metabolism; myo-inositol biosynthesis; myo-inositol from D-glucose 6-phosphate: step 1/2. With respect to regulation, inhibited by 2-deoxyglucitol 6-phosphate (dgtolP) and 2-deoxy-D-glucose 6-phosphate. Inhibited by copper, mercury, cadmium, zinc and copper ions. Activated by potassium and ammonium ions. Its function is as follows. Key enzyme in myo-inositol biosynthesis pathway that catalyzes the conversion of glucose 6-phosphate to 1-myo-inositol 1-phosphate in a NAD-dependent manner. Rate-limiting enzyme in the synthesis of all inositol-containing compounds. Functionally, key enzyme in myo-inositol biosynthesis pathway that catalyzes the conversion of glucose 6-phosphate to 1-myo-inositol 1-phosphate in a NAD-dependent manner. In terms of biological role, competitively inhibits the function of isoform 1, presumably by competing for NAD cofactor. The chain is Inositol-3-phosphate synthase 1 (Isyna1) from Rattus norvegicus (Rat).